A 139-amino-acid chain; its full sequence is Transmembrane protein 250 (139 aa).

2 consecutive transmembrane segments (helical) span residues 56–76 and 116–136; these read FLLY…LAAL and VYGI…FMVF.

(Microbial infection) Interacts with herpes simplex virus 1/HHV-1 protein CVC2/UL25.

The protein localises to the membrane. It localises to the nucleus. It is found in the cytoplasm. May play a role in cell proliferation by promoting progression into S phase. In terms of biological role, (Microbial infection) Promotes human herpes simplex virus 1/HHV-1 proliferation. The polypeptide is Transmembrane protein 250 (Homo sapiens (Human)).